The following is a 287-amino-acid chain: Succinate--CoA ligase [ADP-forming] subunit alpha 2 (287 aa).

CoA contacts are provided by residues Thr-17–Gln-20, Lys-43, and Ile-96–Glu-98. Residue Tyr-159 participates in substrate binding. The Tele-phosphohistidine intermediate role is filled by His-246.

It belongs to the succinate/malate CoA ligase alpha subunit family. In terms of assembly, heterotetramer of two alpha and two beta subunits.

The enzyme catalyses succinate + ATP + CoA = succinyl-CoA + ADP + phosphate. It carries out the reaction GTP + succinate + CoA = succinyl-CoA + GDP + phosphate. It functions in the pathway carbohydrate metabolism; tricarboxylic acid cycle; succinate from succinyl-CoA (ligase route): step 1/1. Its function is as follows. Succinyl-CoA synthetase functions in the citric acid cycle (TCA), coupling the hydrolysis of succinyl-CoA to the synthesis of either ATP or GTP and thus represents the only step of substrate-level phosphorylation in the TCA. The alpha subunit of the enzyme binds the substrates coenzyme A and phosphate, while succinate binding and nucleotide specificity is provided by the beta subunit. This chain is Succinate--CoA ligase [ADP-forming] subunit alpha 2, found in Archaeoglobus fulgidus (strain ATCC 49558 / DSM 4304 / JCM 9628 / NBRC 100126 / VC-16).